Reading from the N-terminus, the 142-residue chain is Transcriptional regulator MraZ (142 aa).

SpoVT-AbrB domains lie at E5–E47 and A76–K119.

The protein belongs to the MraZ family. In terms of assembly, forms oligomers.

Its subcellular location is the cytoplasm. It localises to the nucleoid. The chain is Transcriptional regulator MraZ from Clostridium botulinum (strain Eklund 17B / Type B).